The primary structure comprises 134 residues: Profilin (134 aa).

The protein belongs to the profilin family. As to quaternary structure, occurs in many kinds of cells as a complex with monomeric actin in a 1:1 ratio.

The protein resides in the cytoplasm. It localises to the cytoskeleton. Binds to actin and affects the structure of the cytoskeleton. At high concentrations, profilin prevents the polymerization of actin, whereas it enhances it at low concentrations. By binding to PIP2, it inhibits the formation of IP3 and DG. The chain is Profilin from Brassica napus (Rape).